The chain runs to 319 residues: Cytochrome f (319 aa).

Positions 1-35 are cleaved as a signal peptide; sequence MQNRNISYWIKKCVIQSISIVILMKIIAWPSISEA. Heme contacts are provided by Y36, C56, C59, and H60. Residues 285–305 traverse the membrane as a helical segment; that stretch reads VQSLLVFFVSVTLAQIFLVLK.

Belongs to the cytochrome f family. In terms of assembly, the 4 large subunits of the cytochrome b6-f complex are cytochrome b6, subunit IV (17 kDa polypeptide, petD), cytochrome f and the Rieske protein, while the 4 small subunits are PetG, PetL, PetM and PetN. The complex functions as a dimer. Heme serves as cofactor.

It localises to the plastid. Its subcellular location is the chloroplast thylakoid membrane. Functionally, component of the cytochrome b6-f complex, which mediates electron transfer between photosystem II (PSII) and photosystem I (PSI), cyclic electron flow around PSI, and state transitions. This chain is Cytochrome f, found in Physcomitrium patens (Spreading-leaved earth moss).